The sequence spans 383 residues: MTNPPRILVVAGEASGDTHAAELVAALRARRPDLTFFGMGGARLAAQGVELLFDAREVSVMGITEVLPRIPRILQILKGLAEAAAERKPDVAILVDIPDFNLRLAKKLKALGVPVAYYVSPMIWAWRRGRVRTIKRLVDRMLCILPFEEDFYREAGVSARYVGSPVVEQVPSPDTATAFRERLGLSKDAPTLALLPGSRMGEIRRLLPDMVEAAKRLSAERPGLQVVVPLAPTIDREEITSRFEGSGVTPILVEGRAPEVVGASDAAVVASGTAVLEAGLMQRPLVVVYRVSLITYWVGRLMLKVAFVSLINLLAGRRVVPELLQGEMTPERIAEEVRRVWIPGAPREEMLQGLAEMRGRLGETGAATRAAESVLELLPPGRV.

Belongs to the LpxB family.

The catalysed reaction is a lipid X + a UDP-2-N,3-O-bis[(3R)-3-hydroxyacyl]-alpha-D-glucosamine = a lipid A disaccharide + UDP + H(+). It functions in the pathway bacterial outer membrane biogenesis; LPS lipid A biosynthesis. Condensation of UDP-2,3-diacylglucosamine and 2,3-diacylglucosamine-1-phosphate to form lipid A disaccharide, a precursor of lipid A, a phosphorylated glycolipid that anchors the lipopolysaccharide to the outer membrane of the cell. In Myxococcus xanthus (strain DK1622), this protein is Lipid-A-disaccharide synthase.